A 400-amino-acid polypeptide reads, in one-letter code: GDNF family receptor alpha-3 (400 aa).

Positions methionine 1 to glycine 31 are cleaved as a signal peptide. Cysteines 51 and 57 form a disulfide. 2 N-linked (GlcNAc...) asparagine glycosylation sites follow: asparagine 95 and asparagine 148. 10 disulfide bridges follow: cysteine 162–cysteine 218, cysteine 169–cysteine 175, cysteine 186–cysteine 196, cysteine 191–cysteine 239, cysteine 220–cysteine 227, cysteine 248–cysteine 316, cysteine 255–cysteine 261, cysteine 272–cysteine 288, cysteine 281–cysteine 340, and cysteine 318–cysteine 328. N-linked (GlcNAc...) asparagine glycosylation occurs at asparagine 309. Asparagine 374 is lipidated: GPI-anchor amidated asparagine. Positions proline 375–tryptophan 400 are cleaved as a propeptide — removed in mature form.

Belongs to the GDNFR family. As to quaternary structure, interacts with ARTN ligand and RET: forms a 2:2:2 ternary complex composed of ARTN ligand, GFRA3 and RET receptor. Interacts with SORL1. In terms of processing, N-glycosylated. In terms of tissue distribution, widely expressed in adult and fetus which exhibit a similar pattern. Essentially not expressed in the central nervous system, but highly expressed in several sensory and sympathetic ganglia of the peripheral nervous system. Moderate expression in many non-neuronal tissues, particularly those of the digestive and urogenital systems, but high expression in stomach and appendix. Several types of glandular tissues show low expression. Very low or no expression detected in the hematopoietic system.

It is found in the cell membrane. Its function is as follows. Receptor for artemin (ARTN), a growth factor that supports the survival of sensory and sympathetic peripheral neurons. ARTN-binding leads to autophosphorylation and activation of the RET receptor. This is GDNF family receptor alpha-3 (GFRA3) from Homo sapiens (Human).